The following is a 193-amino-acid chain: Early light-induced protein 2, chloroplastic (193 aa).

Residues 1-43 (MATASFNMQSVFAAPSGVLTTRNIRNTNQLFFKRIAPVGVRCM) constitute a chloroplast transit peptide. The tract at residues 46 to 80 (GDPIKEDPSVPSTSTSATPPQMPQSPPPPVSKPKV) is disordered. The segment covering 54–64 (SVPSTSTSATP) has biased composition (low complexity). Residues 65–76 (PQMPQSPPPPVS) are compositionally biased toward pro residues. 3 consecutive transmembrane segments (helical) span residues 102-122 (LAMV…ENVF), 129-149 (GVGW…VPLF), and 173-193 (FAML…GTLV).

The protein belongs to the ELIP/psbS family.

It is found in the plastid. The protein resides in the chloroplast thylakoid membrane. Its function is as follows. Probably involved in the integration of pigments into the mature light-harvesting pigment-protein complexes. Light-harvesting chlorophyll (LHC) a/b-binding protein required to ensure a high rate of chlorophyll accumulation during deetiolation in continuous high light. Involved in seed germination. May fulfill a photoprotective functions. Prevents excess accumulation of free chlorophyll by inhibiting the entire chlorophyll biosynthesis pathway (e.g. 5-aminolevulinate synthesis and Mg-protoporphyrin IX chelatase activity), and hence prevent photooxidative stress. This Arabidopsis thaliana (Mouse-ear cress) protein is Early light-induced protein 2, chloroplastic.